Consider the following 402-residue polypeptide: 26S proteasome regulatory subunit 8 (402 aa).

Gly-186–Thr-193 contributes to the ATP binding site.

This sequence belongs to the AAA ATPase family.

Its subcellular location is the cytoplasm. The protein localises to the nucleus. The 26S proteasome is involved in the ATP-dependent degradation of ubiquitinated proteins. The regulatory (or ATPase) complex confers ATP dependency and substrate specificity to the 26S complex. The protein is 26S proteasome regulatory subunit 8 of Manduca sexta (Tobacco hawkmoth).